We begin with the raw amino-acid sequence, 175 residues long: Large ribosomal subunit protein uL10 (175 aa).

Belongs to the universal ribosomal protein uL10 family. Part of the ribosomal stalk of the 50S ribosomal subunit. The N-terminus interacts with L11 and the large rRNA to form the base of the stalk. The C-terminus forms an elongated spine to which L12 dimers bind in a sequential fashion forming a multimeric L10(L12)X complex.

Functionally, forms part of the ribosomal stalk, playing a central role in the interaction of the ribosome with GTP-bound translation factors. The polypeptide is Large ribosomal subunit protein uL10 (Psychrobacter cryohalolentis (strain ATCC BAA-1226 / DSM 17306 / VKM B-2378 / K5)).